Consider the following 31-residue polypeptide: Hemocyanin subunit 1 (31 aa).

This sequence belongs to the tyrosinase family. Hemocyanin subfamily. As to expression, hemolymph.

It localises to the secreted. The protein localises to the extracellular space. Its function is as follows. Hemocyanins are copper-containing oxygen carriers occurring freely dissolved in the hemolymph of many mollusks and arthropods. The protein is Hemocyanin subunit 1 of Homarus americanus (American lobster).